Consider the following 332-residue polypeptide: tRNA uridine(34) hydroxylase (332 aa).

One can recognise a Rhodanese domain in the interval 127–221 (SDPETVLIDT…YLEEVPKEKS (95 aa)). The active-site Cysteine persulfide intermediate is Cys-181. A disordered region spans residues 308–332 (AKKLAQLNKQKKQQAKEAARKKAQQ). Residues 321–332 (QAKEAARKKAQQ) are compositionally biased toward basic and acidic residues.

Belongs to the TrhO family.

It carries out the reaction uridine(34) in tRNA + AH2 + O2 = 5-hydroxyuridine(34) in tRNA + A + H2O. Functionally, catalyzes oxygen-dependent 5-hydroxyuridine (ho5U) modification at position 34 in tRNAs. The polypeptide is tRNA uridine(34) hydroxylase (Francisella tularensis subsp. tularensis (strain FSC 198)).